Consider the following 130-residue polypeptide: Small ribosomal subunit protein uS11 (130 aa).

Belongs to the universal ribosomal protein uS11 family. As to quaternary structure, part of the 30S ribosomal subunit. Interacts with proteins S7 and S18. Binds to IF-3.

Its function is as follows. Located on the platform of the 30S subunit, it bridges several disparate RNA helices of the 16S rRNA. Forms part of the Shine-Dalgarno cleft in the 70S ribosome. The polypeptide is Small ribosomal subunit protein uS11 (Nautilia profundicola (strain ATCC BAA-1463 / DSM 18972 / AmH)).